Consider the following 701-residue polypeptide: Elongation factor G (701 aa).

A tr-type G domain is found at 8–290; sequence SLYRNIGISA…AVVELLPAPT (283 aa). GTP-binding positions include 17 to 24, 88 to 92, and 142 to 145; these read AHIDAGKT, DTPGH, and NKMD.

It belongs to the TRAFAC class translation factor GTPase superfamily. Classic translation factor GTPase family. EF-G/EF-2 subfamily.

The protein resides in the cytoplasm. Catalyzes the GTP-dependent ribosomal translocation step during translation elongation. During this step, the ribosome changes from the pre-translocational (PRE) to the post-translocational (POST) state as the newly formed A-site-bound peptidyl-tRNA and P-site-bound deacylated tRNA move to the P and E sites, respectively. Catalyzes the coordinated movement of the two tRNA molecules, the mRNA and conformational changes in the ribosome. The chain is Elongation factor G from Neisseria meningitidis serogroup B (strain ATCC BAA-335 / MC58).